A 428-amino-acid polypeptide reads, in one-letter code: YTH domain-containing protein ECT1 (428 aa).

Residues 245–382 (AKFFVIKSYS…EHGTKIIKIF (138 aa)) form the YTH domain. RNA-binding positions include 251–253 (KSY), Asp-257, 267–268 (WS), Asn-300, Trp-324, Trp-329, and Trp-337.

Interacts (via C-terminus) with CIPK1. As to expression, expressed in root apex, shoot apex, lateral root primordia, stamens, carpels and trichomes.

The protein localises to the nucleus. It is found in the cytoplasm. In terms of biological role, specifically recognizes and binds N6-methyladenosine (m6A)-containing RNAs, and regulates mRNA stability. M6A is a modification present at internal sites of mRNAs and some non-coding RNAs and plays a role in mRNA stability and processing. The chain is YTH domain-containing protein ECT1 from Arabidopsis thaliana (Mouse-ear cress).